A 405-amino-acid polypeptide reads, in one-letter code: Divinyl chlorophyllide a 8-vinyl-reductase, chloroplastic (405 aa).

Residues 1-58 (MAALLLSSHLTAASSSSTTSPTARPAPSFVSFRAANAAPKGARRGWPFLASSVEPPPA) constitute a chloroplast transit peptide.

It localises to the plastid. It is found in the chloroplast. It catalyses the reaction protochlorophyllide a + NADP(+) = 3,8-divinyl protochlorophyllide a + NADPH + H(+). Its pathway is porphyrin-containing compound metabolism; chlorophyll biosynthesis. In terms of biological role, catalyzes the conversion of divinyl chlorophyllide to monovinyl chlorophyllide. Reduces the 8-vinyl group of the tetrapyrrole to an ethyl group using NADPH as the reductant. Can use (3,8-divinyl)-chlorophyllide a (DV-Chlidea) &gt; (3,8-divinyl)-chlorophyll a (DV-Chla) &gt; (3,8-divinyl)-protochlorophyllide a (DV-Pchlidea) &gt; (3,8-divinyl)-magnesium-protoporphyrin IX monomethyl ester (DV-MPE) &gt; (3,8-divinyl)-magnesium-protoporphyrin IX (DV-Mg-Proto) as substrates. The sequence is that of Divinyl chlorophyllide a 8-vinyl-reductase, chloroplastic (DVR) from Oryza sativa subsp. indica (Rice).